Here is a 474-residue protein sequence, read N- to C-terminus: Glutamate--tRNA ligase 1 (474 aa).

The 'HIGH' region motif lies at 11–21; it reads PSPTGYLHIGG. The 'KMSKS' region signature appears at 240–244; that stretch reads KLSKR. Lys-243 lines the ATP pocket.

The protein belongs to the class-I aminoacyl-tRNA synthetase family. Glutamate--tRNA ligase type 1 subfamily. Monomer.

The protein resides in the cytoplasm. The catalysed reaction is tRNA(Glu) + L-glutamate + ATP = L-glutamyl-tRNA(Glu) + AMP + diphosphate. Its function is as follows. Catalyzes the attachment of glutamate to tRNA(Glu) in a two-step reaction: glutamate is first activated by ATP to form Glu-AMP and then transferred to the acceptor end of tRNA(Glu). In Mesorhizobium japonicum (strain LMG 29417 / CECT 9101 / MAFF 303099) (Mesorhizobium loti (strain MAFF 303099)), this protein is Glutamate--tRNA ligase 1.